Reading from the N-terminus, the 468-residue chain is Argininosuccinate lyase (468 aa).

It belongs to the lyase 1 family. Argininosuccinate lyase subfamily.

It localises to the cytoplasm. It carries out the reaction 2-(N(omega)-L-arginino)succinate = fumarate + L-arginine. It functions in the pathway amino-acid biosynthesis; L-arginine biosynthesis; L-arginine from L-ornithine and carbamoyl phosphate: step 3/3. The chain is Argininosuccinate lyase from Paraburkholderia xenovorans (strain LB400).